A 355-amino-acid polypeptide reads, in one-letter code: Guanine nucleotide-binding protein G(i) subunit alpha-2 (355 aa).

Gly-2 is lipidated: N-myristoyl glycine. Cys-3 is lipidated: S-palmitoyl cysteine. Positions 32–355 (REVKLLLLGA…KNNLKDCGLF (324 aa)) constitute a G-alpha domain. Residues 35–48 (KLLLLGAGESGKST) form a G1 motif region. GTP contacts are provided by residues 40 to 47 (GAGESGKS), 176 to 182 (LRTRVKT), 201 to 205 (DVGGQ), 270 to 273 (NKKD), and Ala-327. The Mg(2+) site is built by Ser-47 and Thr-182. The G2 motif stretch occupies residues 174 to 182 (DVLRTRVKT). The interval 197–206 (FKMFDVGGQR) is G3 motif. The tract at residues 266–273 (ILFLNKKD) is G4 motif. The segment at 325-330 (TCATDT) is G5 motif.

Belongs to the G-alpha family. G(i/o/t/z) subfamily. G proteins are composed of 3 units; alpha, beta and gamma. The alpha chain contains the guanine nucleotide binding site. In this context, interacts with GNB2. Interacts with UNC5B. Interacts with GPSM1. Interacts with RGS12 and RGS14. Interacts (inactive GDP-bound form) with NUCB1 (via GBA motif); the interaction leads to activation of GNAI3. Interacts (inactive GDP-bound form) with CCDC88C/DAPLE (via GBA motif). Interacts (inactive GDP-bound form) with CCDC8A/GIV (via GBA motif). Interacts with CXCR1 and CXCR2.

The protein resides in the cytoplasm. Its subcellular location is the cytoskeleton. It localises to the microtubule organizing center. It is found in the centrosome. The protein localises to the cell membrane. The protein resides in the membrane. Functionally, guanine nucleotide-binding proteins (G proteins) are involved as modulators or transducers in various transmembrane signaling systems. The G(i) proteins are involved in hormonal regulation of adenylate cyclase: they inhibit the cyclase in response to beta-adrenergic stimuli. May play a role in cell division. This is Guanine nucleotide-binding protein G(i) subunit alpha-2 (Gnai2) from Mus musculus (Mouse).